The sequence spans 75 residues: Mitotic-spindle organizing protein 1 (75 aa).

Belongs to the MOZART1 family. In terms of assembly, part of the gamma-tubulin complex.

Its subcellular location is the cytoplasm. It localises to the cytoskeleton. It is found in the microtubule organizing center. The protein resides in the centrosome. The protein localises to the spindle. In terms of biological role, required for gamma-tubulin complex recruitment to the centrosome. The chain is Mitotic-spindle organizing protein 1 (mzt1) from Danio rerio (Zebrafish).